Here is a 154-residue protein sequence, read N- to C-terminus: MGLSDGEWQLVLNIWGKVETDEGGHGKDVLIRLFKGHPETLEKFDKFKHLKSEDEMKASEDLKKHGITVLTALGNILKKKGHHEAELKPLAQSHATKHKIPVQFLEFISDAIIQVIQSKHAGNFGADAQAAMKKALELFRHDMAAKYKEFGFQG.

The Globin domain occupies Gly2–Lys148. Ser4 bears the Phosphoserine mark. His65 is a binding site for nitrite. His65 contacts O2. Thr68 is subject to Phosphothreonine. Residue His94 coordinates heme b.

This sequence belongs to the globin family. As to quaternary structure, monomeric.

The protein localises to the cytoplasm. The protein resides in the sarcoplasm. The enzyme catalyses Fe(III)-heme b-[protein] + nitric oxide + H2O = Fe(II)-heme b-[protein] + nitrite + 2 H(+). It catalyses the reaction H2O2 + AH2 = A + 2 H2O. Its function is as follows. Monomeric heme protein which primary function is to store oxygen and facilitate its diffusion within muscle tissues. Reversibly binds oxygen through a pentacoordinated heme iron and enables its timely and efficient release as needed during periods of heightened demand. Depending on the oxidative conditions of tissues and cells, and in addition to its ability to bind oxygen, it also has a nitrite reductase activity whereby it regulates the production of bioactive nitric oxide. Under stress conditions, like hypoxia and anoxia, it also protects cells against reactive oxygen species thanks to its pseudoperoxidase activity. In Osphranter rufus (Red kangaroo), this protein is Myoglobin (MB).